The chain runs to 396 residues: NADH-ubiquinone oxidoreductase 49 kDa subunit (396 aa).

Belongs to the complex I 49 kDa subunit family.

Its subcellular location is the mitochondrion. The enzyme catalyses a ubiquinone + NADH + 5 H(+)(in) = a ubiquinol + NAD(+) + 4 H(+)(out). Functionally, core subunit of the mitochondrial membrane respiratory chain NADH dehydrogenase (Complex I) that is believed to belong to the minimal assembly required for catalysis. Complex I functions in the transfer of electrons from NADH to the respiratory chain. The immediate electron acceptor for the enzyme is believed to be ubiquinone. Component of the iron-sulfur (IP) fragment of the enzyme. Component of the iron-sulfur (IP) fragment of the enzyme. The polypeptide is NADH-ubiquinone oxidoreductase 49 kDa subunit (NAD7) (Reclinomonas americana).